We begin with the raw amino-acid sequence, 385 residues long: 6-hydroxynicotinate 3-monooxygenase (385 aa).

An N-terminal signal peptide occupies residues 1-20 (MSQSPRIAVVGAGLGGAAAA). Residues G15, 34-35 (EQ), H47, R108, and L130 each bind FAD. H47 functions as the Proton acceptor in the catalytic mechanism. Y215 serves as the catalytic Proton acceptor. FAD is bound by residues D294 and 307–308 (AA).

Belongs to the 6-hydroxynicotinate 3-monooxygenase family. In terms of assembly, monomer. The cofactor is FAD.

The catalysed reaction is 6-hydroxynicotinate + NADH + O2 + 2 H(+) = 2,5-dihydroxypyridine + CO2 + NAD(+) + H2O. With respect to regulation, inhibited competitively by nicotinic acid with a Ki of 0.49 mM. Inhibited by thiol-specific compounds p-chloromercuribenzoate, DTNB, Ag(2)SO(4), HgCl(2), CuCl(2) and N-ethylmaleimide. No inhibition by o-phenanthroline, 8-hydroxyquinoline, EDTA, disodium 4,5-dihydroxy-m-benzenedisulfonate, fluoride, azide, KCl, LiCl, NaCl, BaCl(2), MnCl(2), MgCl(2), PBCl, ZnCl(2), CoCl(2), SnCl(2), FeSO(4), FeCl(3), NiCl(2), CdCl(2), AlCl(3), iodoacetic acid, hydro-xylamine, phenylhydrazine, semicarbazide, cysteamine, alpha,alpha-dipyridyl and urea. In terms of biological role, flavin-dependent monooxygenase (FMO) that catalyzes the decarboxylative hydroxylation of 6-hydroxynicotinic acid (6-HNA) to 2,5-dihydroxypyridine (2,5-DHP) with concomitant oxidation of NADH, a step in the aerobic nicotinate degradation pathway. Uses NADH in preference to NADPH as an electron donor. The chain is 6-hydroxynicotinate 3-monooxygenase (nicC) from Pseudomonas fluorescens.